The sequence spans 945 residues: Kinesin-like protein KIN-7F (945 aa).

Residues 34–356 (RILVSVRLRP…LLFASCAKEV (323 aa)) enclose the Kinesin motor domain. Residue 120–127 (GQTSSGKT) coordinates ATP. Residues 365–437 (VMSDKALVKQ…QDLLQVVGDN (73 aa)) adopt a coiled-coil conformation. Disordered stretches follow at residues 484-512 (RRVA…SVSS) and 553-588 (NECL…MNSR). 2 stretches are compositionally biased toward polar residues: residues 495-512 (QAEN…SVSS) and 560-587 (AVGS…SMNS).

The protein belongs to the TRAFAC class myosin-kinesin ATPase superfamily. Kinesin family. KIN-7 subfamily. In terms of assembly, binds microtubules.

Functionally, binds ATP/ADP in vitro. Possesses low ATPase activity but high affinity for microtubules. The chain is Kinesin-like protein KIN-7F from Oryza sativa subsp. japonica (Rice).